The primary structure comprises 362 residues: Histidinol-phosphate aminotransferase 1 (362 aa).

Residue Lys226 is modified to N6-(pyridoxal phosphate)lysine.

This sequence belongs to the class-II pyridoxal-phosphate-dependent aminotransferase family. Histidinol-phosphate aminotransferase subfamily. In terms of assembly, homodimer. Pyridoxal 5'-phosphate is required as a cofactor.

It carries out the reaction L-histidinol phosphate + 2-oxoglutarate = 3-(imidazol-4-yl)-2-oxopropyl phosphate + L-glutamate. Its pathway is amino-acid biosynthesis; L-histidine biosynthesis; L-histidine from 5-phospho-alpha-D-ribose 1-diphosphate: step 7/9. This Dechloromonas aromatica (strain RCB) protein is Histidinol-phosphate aminotransferase 1.